The sequence spans 149 residues: Cytochrome c' (149 aa).

Positions 1–19 are cleaved as a signal peptide; that stretch reads MRRVLLATLMAALPAAAMA. Heme c contacts are provided by Arg-29, Thr-89, Ala-90, Cys-138, Cys-141, and His-142.

Monomer and homodimer. Binds 1 heme c group covalently per subunit.

In terms of biological role, cytochrome c' is the most widely occurring bacterial c-type cytochrome. Cytochromes c' are high-spin proteins and the heme has no sixth ligand. Their exact function is not known. The polypeptide is Cytochrome c' (cycP) (Cereibacter sphaeroides (strain ATCC 17023 / DSM 158 / JCM 6121 / CCUG 31486 / LMG 2827 / NBRC 12203 / NCIMB 8253 / ATH 2.4.1.) (Rhodobacter sphaeroides)).